Consider the following 598-residue polypeptide: Elongation factor 4 (598 aa).

The tr-type G domain maps to 4–181 (KKIRNFAIIA…AIVNLIPPPQ (178 aa)). GTP is bound by residues 16–21 (DHGKST) and 128–131 (NKID).

The protein belongs to the TRAFAC class translation factor GTPase superfamily. Classic translation factor GTPase family. LepA subfamily.

The protein localises to the cell membrane. The catalysed reaction is GTP + H2O = GDP + phosphate + H(+). In terms of biological role, required for accurate and efficient protein synthesis under certain stress conditions. May act as a fidelity factor of the translation reaction, by catalyzing a one-codon backward translocation of tRNAs on improperly translocated ribosomes. Back-translocation proceeds from a post-translocation (POST) complex to a pre-translocation (PRE) complex, thus giving elongation factor G a second chance to translocate the tRNAs correctly. Binds to ribosomes in a GTP-dependent manner. This is Elongation factor 4 from Mesomycoplasma hyopneumoniae (strain 232) (Mycoplasma hyopneumoniae).